Here is a 255-residue protein sequence, read N- to C-terminus: Hydroxyacylglutathione hydrolase (255 aa).

Zn(2+)-binding residues include His53, His55, Asp57, His58, His110, Asp127, and His165.

It belongs to the metallo-beta-lactamase superfamily. Glyoxalase II family. As to quaternary structure, monomer. Zn(2+) serves as cofactor.

The enzyme catalyses an S-(2-hydroxyacyl)glutathione + H2O = a 2-hydroxy carboxylate + glutathione + H(+). It functions in the pathway secondary metabolite metabolism; methylglyoxal degradation; (R)-lactate from methylglyoxal: step 2/2. Functionally, thiolesterase that catalyzes the hydrolysis of S-D-lactoyl-glutathione to form glutathione and D-lactic acid. The chain is Hydroxyacylglutathione hydrolase from Xanthomonas axonopodis pv. citri (strain 306).